A 296-amino-acid polypeptide reads, in one-letter code: NAD kinase (296 aa).

The Proton acceptor role is filled by Asp-72. NAD(+)-binding positions include 72 to 73 (DG), 146 to 147 (ND), Arg-157, Lys-174, Asp-176, 187 to 192 (TAYALS), and Gln-247.

This sequence belongs to the NAD kinase family. Requires a divalent metal cation as cofactor.

The protein localises to the cytoplasm. The catalysed reaction is NAD(+) + ATP = ADP + NADP(+) + H(+). Involved in the regulation of the intracellular balance of NAD and NADP, and is a key enzyme in the biosynthesis of NADP. Catalyzes specifically the phosphorylation on 2'-hydroxyl of the adenosine moiety of NAD to yield NADP. This chain is NAD kinase, found in Pseudomonas syringae pv. tomato (strain ATCC BAA-871 / DC3000).